A 140-amino-acid chain; its full sequence is Nucleoside diphosphate kinase (140 aa).

ATP-binding residues include lysine 11, phenylalanine 59, arginine 87, threonine 93, arginine 104, and asparagine 114. Histidine 117 serves as the catalytic Pros-phosphohistidine intermediate.

Belongs to the NDK family. In terms of assembly, homotetramer. The cofactor is Mg(2+).

Its subcellular location is the cytoplasm. The catalysed reaction is a 2'-deoxyribonucleoside 5'-diphosphate + ATP = a 2'-deoxyribonucleoside 5'-triphosphate + ADP. The enzyme catalyses a ribonucleoside 5'-diphosphate + ATP = a ribonucleoside 5'-triphosphate + ADP. Its function is as follows. Major role in the synthesis of nucleoside triphosphates other than ATP. The ATP gamma phosphate is transferred to the NDP beta phosphate via a ping-pong mechanism, using a phosphorylated active-site intermediate. This chain is Nucleoside diphosphate kinase, found in Beijerinckia indica subsp. indica (strain ATCC 9039 / DSM 1715 / NCIMB 8712).